The following is a 427-amino-acid chain: Light-independent protochlorophyllide reductase subunit N (427 aa).

[4Fe-4S] cluster is bound by residues C29, C54, and C115.

This sequence belongs to the BchN/ChlN family. Protochlorophyllide reductase is composed of three subunits; BchL, BchN and BchB. Forms a heterotetramer of two BchB and two BchN subunits. It depends on [4Fe-4S] cluster as a cofactor.

It carries out the reaction chlorophyllide a + oxidized 2[4Fe-4S]-[ferredoxin] + 2 ADP + 2 phosphate = protochlorophyllide a + reduced 2[4Fe-4S]-[ferredoxin] + 2 ATP + 2 H2O. It participates in porphyrin-containing compound metabolism; bacteriochlorophyll biosynthesis (light-independent). In terms of biological role, component of the dark-operative protochlorophyllide reductase (DPOR) that uses Mg-ATP and reduced ferredoxin to reduce ring D of protochlorophyllide (Pchlide) to form chlorophyllide a (Chlide). This reaction is light-independent. The NB-protein (BchN-BchB) is the catalytic component of the complex. This chain is Light-independent protochlorophyllide reductase subunit N, found in Bradyrhizobium sp. (strain ORS 278).